The chain runs to 310 residues: Transcription initiation factor TFIID subunit 8 (310 aa).

Residues Met1–His30 form a disordered region. Ala2 is modified (N-acetylalanine). The 68-residue stretch at Arg35–Phe102 folds into the Histone-fold; involved in forming hexamer structure in TFIID complex domain. Phosphothreonine is present on Thr130. The tract at residues Asp262 to Ser310 is disordered. Residues Thr270–Arg283 are compositionally biased toward polar residues. Position 271 is a phosphoserine (Ser271). A Nuclear localization signal motif is present at residues Tyr294 to Lys307. Residues Pro297–Ser310 show a composition bias toward basic residues.

It belongs to the TAF8 family. As to quaternary structure, component of the TFIID basal transcription factor complex, composed of TATA-box-binding protein TBP, and a number of TBP-associated factors (TAFs), including TAF1, TAF2, TAF3, TAF4, TAF5, TAF6, TAF7, TAF8, TAF9, TAF10, TAF11, TAF12 and TAF13. Interacts with TBP, TAF1, TAF6, TAF10, TAF11 and TAF13. Component also of a small TAF complex (SMAT) containing TAF8, TAF10 and SUPT7L. Forms a heterodimer with TAF10. Interaction with TAF10 is mediated mainly via its histone fold domain while interaction with SUPT7L is via its C-terminal region.

The protein localises to the nucleus. The protein resides in the cytoplasm. The TFIID basal transcription factor complex plays a major role in the initiation of RNA polymerase II (Pol II)-dependent transcription. TFIID recognizes and binds promoters with or without a TATA box via its subunit TBP, a TATA-box-binding protein, and promotes assembly of the pre-initiation complex (PIC). The TFIID complex consists of TBP and TBP-associated factors (TAFs), including TAF1, TAF2, TAF3, TAF4, TAF5, TAF6, TAF7, TAF8, TAF9, TAF10, TAF11, TAF12 and TAF13. The TFIID complex structure can be divided into 3 modules TFIID-A, TFIID-B, and TFIID-C. TAF8 is involved in forming the TFIID-B module, together with TAF5. Mediates both basal and activator-dependent transcription. Plays a role in the differentiation of preadipocyte fibroblasts to adipocytes, however, does not seem to play a role in differentiation of myoblasts. Required for the integration of TAF10 in the TAF complex. May be important for survival of cells of the inner cell mass which constitute the pluripotent cell population of the early embryo. This Homo sapiens (Human) protein is Transcription initiation factor TFIID subunit 8 (TAF8).